Reading from the N-terminus, the 335-residue chain is Probable deoxyhypusine synthase (335 aa).

Lys307 functions as the Nucleophile in the catalytic mechanism.

Belongs to the deoxyhypusine synthase family. NAD(+) is required as a cofactor.

It carries out the reaction [eIF5A protein]-L-lysine + spermidine = [eIF5A protein]-deoxyhypusine + propane-1,3-diamine. The protein operates within protein modification; eIF5A hypusination. Catalyzes the NAD-dependent oxidative cleavage of spermidine and the subsequent transfer of the butylamine moiety of spermidine to the epsilon-amino group of a specific lysine residue of the eIF-5A precursor protein to form the intermediate deoxyhypusine residue. This chain is Probable deoxyhypusine synthase (dys), found in Pyrococcus abyssi (strain GE5 / Orsay).